Consider the following 366-residue polypeptide: Spermidine/putrescine import ATP-binding protein PotA (366 aa).

Residues 8–239 enclose the ABC transporter domain; that stretch reads IRFENVTKQF…PINKFVADFI (232 aa). An ATP-binding site is contributed by 41–48; the sequence is GPSGCGKT.

The protein belongs to the ABC transporter superfamily. Spermidine/putrescine importer (TC 3.A.1.11.1) family. As to quaternary structure, the complex is composed of two ATP-binding proteins (PotA), two transmembrane proteins (PotB and PotC) and a solute-binding protein (PotD).

The protein resides in the cell membrane. The enzyme catalyses ATP + H2O + polyamine-[polyamine-binding protein]Side 1 = ADP + phosphate + polyamineSide 2 + [polyamine-binding protein]Side 1.. Its function is as follows. Part of the ABC transporter complex PotABCD involved in spermidine/putrescine import. Responsible for energy coupling to the transport system. This chain is Spermidine/putrescine import ATP-binding protein PotA, found in Listeria monocytogenes serotype 4b (strain F2365).